Reading from the N-terminus, the 647-residue chain is MSKKEININNYNDDAIQVLEGLDAVRKRPGMYIGSTDGAGLHHLVWEIVDNAVDEALSGFGDRIDVTINKDGSLTVQDHGRGMPTGMHAMGIPTVEVIFTILHAGGKFGQGGYKTSGGLHGVGSSVVNALSSWLEVEITRDGAVYKQRFENGGKPVTTLKKIGTAPKSKTGTKVTFMPDATIFSTTDFKYNTISERLNESAFLLKNVTLSLTDKRTNEAIEFHYENGVQDFVSYLNEDKEILTPVLYFEGEDNGFQVEVALQYNDGFSDNILSFVNNVRTKDGGTHETGLKSAITKVMNDYARKTGLLKEKDKNLEGSDYREGLAAVLSILVPEEHLQFEGQTKDKLGSPLARPVVDGIVADKLTFFLMENGELASNLIRKAIKARDAREAARKARDESRNGKKNKKDKGLLSGKLTPAQSKNPAKNELYLVEGDSAGGSAKQGRDRKFQAILPLRGKVVNTAKAKMADILKNEEINTMIYTIGAGVGADFSIEDANYDKIIIMTDADTDGAHIQTLLLTFFYRYMRPLVEAGHVYIALPPLYKMSKGKGKKEEVAYAWTDGELEELRKQFGKGATLQRYKGLGEMNADQLWETTMNPETRTLIRVTIEDLARAERRVNVLMGDKVEPRRKWIEDNVKFTLEETTVF.

ATP is bound by residues Tyr11, Asn51, Asp78, 118 to 124 (GLHGVGS), and Lys344. The segment covering 391–401 (AARKARDESRN) has biased composition (basic and acidic residues). The interval 391 to 421 (AARKARDESRNGKKNKKDKGLLSGKLTPAQS) is disordered. In terms of domain architecture, Toprim spans 427-541 (NELYLVEGDS…AGHVYIALPP (115 aa)). Residues Glu433, Asp506, and Asp508 each coordinate Mg(2+).

This sequence belongs to the type II topoisomerase family. ParE type 2 subfamily. In terms of assembly, heterotetramer composed of ParC and ParE. It depends on Mg(2+) as a cofactor. The cofactor is Mn(2+). Ca(2+) is required as a cofactor.

It catalyses the reaction ATP-dependent breakage, passage and rejoining of double-stranded DNA.. Inhibited by quinolones, such as levofloxacin. Topoisomerase IV is essential for chromosome segregation. It relaxes supercoiled DNA. Performs the decatenation events required during the replication of a circular DNA molecule. This chain is DNA topoisomerase 4 subunit B, found in Streptococcus pneumoniae serotype 4 (strain ATCC BAA-334 / TIGR4).